The following is a 200-amino-acid chain: Molybdenum cofactor guanylyltransferase (200 aa).

GTP contacts are provided by residues 15–17, K28, D74, and D104; that span reads LAG. Mg(2+) is bound at residue D104.

It belongs to the MobA family. As to quaternary structure, monomer. The cofactor is Mg(2+).

It localises to the cytoplasm. The catalysed reaction is Mo-molybdopterin + GTP + H(+) = Mo-molybdopterin guanine dinucleotide + diphosphate. Functionally, transfers a GMP moiety from GTP to Mo-molybdopterin (Mo-MPT) cofactor (Moco or molybdenum cofactor) to form Mo-molybdopterin guanine dinucleotide (Mo-MGD) cofactor. The protein is Molybdenum cofactor guanylyltransferase of Pseudomonas fluorescens (strain Pf0-1).